The chain runs to 193 residues: Zinc finger protein AZF3 (193 aa).

2 consecutive C2H2-type zinc fingers follow at residues Tyr75–His97 and His118–His140.

As to expression, expressed in roots.

It localises to the nucleus. In terms of biological role, transcriptional repressor probably involved in abiotic stress responses. Binds DNA in a sequence-specific manner and can repress the transactivation activity of other transcription factors. The sequence is that of Zinc finger protein AZF3 (AZF3) from Arabidopsis thaliana (Mouse-ear cress).